Reading from the N-terminus, the 489-residue chain is UDP-N-acetylmuramoylalanine--D-glutamate ligase (489 aa).

126-132 (GTNGKTT) provides a ligand contact to ATP.

This sequence belongs to the MurCDEF family.

It is found in the cytoplasm. It carries out the reaction UDP-N-acetyl-alpha-D-muramoyl-L-alanine + D-glutamate + ATP = UDP-N-acetyl-alpha-D-muramoyl-L-alanyl-D-glutamate + ADP + phosphate + H(+). Its pathway is cell wall biogenesis; peptidoglycan biosynthesis. Cell wall formation. Catalyzes the addition of glutamate to the nucleotide precursor UDP-N-acetylmuramoyl-L-alanine (UMA). In Mycolicibacterium paratuberculosis (strain ATCC BAA-968 / K-10) (Mycobacterium paratuberculosis), this protein is UDP-N-acetylmuramoylalanine--D-glutamate ligase.